A 215-amino-acid chain; its full sequence is MEGRIPLIGEEFPRLEVKTTHGKKILPDDFRGKWFVLFSHPADFTPVCTTEFVAFQKRYDEFKKLNTELIGLSIDQVFSHIKWIEWIKEKLGVEIEFPVIADDLGEVSRRLGLIHPSKGTNTVRAVFIVDPNGIIRAIVYYPQEVGRNIDEILRAVRALQTSDEKGVAIPANWPSNELINDSVIVPPASSVEEARERLESKDFECYDWWFCYKKV.

Residues 6-161 enclose the Thioredoxin domain; the sequence is PLIGEEFPRL…ILRAVRALQT (156 aa). Cysteine 48 (cysteine sulfenic acid (-SOH) intermediate) is an active-site residue. Residue arginine 124 participates in substrate binding. Residues cysteine 205 and cysteine 211 are joined by a disulfide bond.

This sequence belongs to the peroxiredoxin family. Prx6 subfamily. In terms of assembly, homodecamer. Pentamer of dimers that assemble into a ring structure.

It localises to the cytoplasm. The enzyme catalyses a hydroperoxide + [thioredoxin]-dithiol = an alcohol + [thioredoxin]-disulfide + H2O. Its function is as follows. Thiol-specific peroxidase that catalyzes the reduction of hydrogen peroxide and organic hydroperoxides to water and alcohols, respectively. Plays a role in cell protection against oxidative stress by detoxifying peroxides. The polypeptide is Peroxiredoxin (Thermotoga petrophila (strain ATCC BAA-488 / DSM 13995 / JCM 10881 / RKU-1)).